Reading from the N-terminus, the 198-residue chain is Pyridoxal 5'-phosphate synthase subunit PdxT (198 aa).

An L-glutamine-binding site is contributed by 49–51 (GES). Cysteine 81 serves as the catalytic Nucleophile. L-glutamine contacts are provided by residues arginine 113 and 141–142 (IR). Active-site charge relay system residues include histidine 177 and glutamate 179.

It belongs to the glutaminase PdxT/SNO family. As to quaternary structure, in the presence of PdxS, forms a dodecamer of heterodimers. Only shows activity in the heterodimer.

It carries out the reaction aldehydo-D-ribose 5-phosphate + D-glyceraldehyde 3-phosphate + L-glutamine = pyridoxal 5'-phosphate + L-glutamate + phosphate + 3 H2O + H(+). The enzyme catalyses L-glutamine + H2O = L-glutamate + NH4(+). It participates in cofactor biosynthesis; pyridoxal 5'-phosphate biosynthesis. Its function is as follows. Catalyzes the hydrolysis of glutamine to glutamate and ammonia as part of the biosynthesis of pyridoxal 5'-phosphate. The resulting ammonia molecule is channeled to the active site of PdxS. The sequence is that of Pyridoxal 5'-phosphate synthase subunit PdxT from Mycobacterium leprae (strain TN).